A 361-amino-acid polypeptide reads, in one-letter code: UPF0283 membrane protein Smed_1530 (361 aa).

Residues 1-40 (MNDDSNGRRRRPAAFPVGTEDATSRELEQTPRRAPGSFSD) form a disordered region. Positions 22–31 (ATSRELEQTP) are enriched in basic and acidic residues. Helical transmembrane passes span 76 to 96 (FGKI…GLWV) and 109 to 129 (WLGY…LIVV).

It belongs to the UPF0283 family.

The protein resides in the cell inner membrane. The polypeptide is UPF0283 membrane protein Smed_1530 (Sinorhizobium medicae (strain WSM419) (Ensifer medicae)).